We begin with the raw amino-acid sequence, 87 residues long: Probable acyl carrier protein PigG (87 aa).

In terms of domain architecture, Carrier spans Met-1–Lys-78. Ser-36 bears the O-(pantetheine 4'-phosphoryl)serine mark.

It functions in the pathway antibiotic biosynthesis; prodigiosin biosynthesis. Involved in the biosynthesis of 4-methoxy-2,2'-bipyrrole-5-carbaldehyde (MBC), one of the terminal products involved in the biosynthesis of the red antibiotic prodigiosin (Pig). Carrier of the L-prolyl group transferred from L-prolyl-AMP by PigI. This chain is Probable acyl carrier protein PigG, found in Serratia sp. (strain ATCC 39006) (Prodigiosinella confusarubida).